Here is a 594-residue protein sequence, read N- to C-terminus: Elongation factor 4 (594 aa).

In terms of domain architecture, tr-type G spans 2-184 (KNIRNFSIIA…TIVAKVPAPE (183 aa)). GTP is bound by residues 14 to 19 (DHGKST) and 131 to 134 (NKID).

The protein belongs to the TRAFAC class translation factor GTPase superfamily. Classic translation factor GTPase family. LepA subfamily.

Its subcellular location is the cell inner membrane. It carries out the reaction GTP + H2O = GDP + phosphate + H(+). Its function is as follows. Required for accurate and efficient protein synthesis under certain stress conditions. May act as a fidelity factor of the translation reaction, by catalyzing a one-codon backward translocation of tRNAs on improperly translocated ribosomes. Back-translocation proceeds from a post-translocation (POST) complex to a pre-translocation (PRE) complex, thus giving elongation factor G a second chance to translocate the tRNAs correctly. Binds to ribosomes in a GTP-dependent manner. The sequence is that of Elongation factor 4 from Francisella tularensis subsp. tularensis (strain FSC 198).